Here is a 377-residue protein sequence, read N- to C-terminus: Chaperone protein DnaJ (377 aa).

In terms of domain architecture, J spans D5–G70. The CR-type zinc finger occupies G133–S211. The Zn(2+) site is built by C146, C149, C163, C166, C185, C188, C199, and C202. CXXCXGXG motif repeat units lie at residues C146 to G153, C163 to G170, C185 to G192, and C199 to G206.

The protein belongs to the DnaJ family. Homodimer. Zn(2+) serves as cofactor.

It is found in the cytoplasm. Its function is as follows. Participates actively in the response to hyperosmotic and heat shock by preventing the aggregation of stress-denatured proteins and by disaggregating proteins, also in an autonomous, DnaK-independent fashion. Unfolded proteins bind initially to DnaJ; upon interaction with the DnaJ-bound protein, DnaK hydrolyzes its bound ATP, resulting in the formation of a stable complex. GrpE releases ADP from DnaK; ATP binding to DnaK triggers the release of the substrate protein, thus completing the reaction cycle. Several rounds of ATP-dependent interactions between DnaJ, DnaK and GrpE are required for fully efficient folding. Also involved, together with DnaK and GrpE, in the DNA replication of plasmids through activation of initiation proteins. This is Chaperone protein DnaJ from Psychromonas ingrahamii (strain DSM 17664 / CCUG 51855 / 37).